Reading from the N-terminus, the 331-residue chain is Adenosine deaminase (331 aa).

Residues His-12 and His-14 each contribute to the Zn(2+) site. Residues His-14, Asp-16, and Gly-170 each contribute to the substrate site. Zn(2+) is bound at residue His-197. Catalysis depends on Glu-200, which acts as the Proton donor. Asp-278 is a binding site for Zn(2+). Asp-279 provides a ligand contact to substrate.

The protein belongs to the metallo-dependent hydrolases superfamily. Adenosine and AMP deaminases family. Adenosine deaminase subfamily. Requires Zn(2+) as cofactor.

It carries out the reaction adenosine + H2O + H(+) = inosine + NH4(+). The enzyme catalyses 2'-deoxyadenosine + H2O + H(+) = 2'-deoxyinosine + NH4(+). Functionally, catalyzes the hydrolytic deamination of adenosine and 2-deoxyadenosine. This chain is Adenosine deaminase, found in Shewanella putrefaciens (strain CN-32 / ATCC BAA-453).